Consider the following 83-residue polypeptide: Retinal cone rhodopsin-sensitive cGMP 3',5'-cyclic phosphodiesterase subunit gamma (83 aa).

Positions 1-17 (MSDNTVLAPPTSNQGPT) are enriched in polar residues. Residues 1–51 (MSDNTVLAPPTSNQGPTTPRKGPPKFKQRQTRQFKSKPPKKGVKGFGDDIP) form a disordered region. Positions 22-43 (GPPKFKQRQTRQFKSKPPKKGV) are enriched in basic residues.

Belongs to the rod/cone cGMP-PDE gamma subunit family. In terms of assembly, tetramer composed of two catalytic chains (alpha and beta), and two inhibitory chains (gamma).

It catalyses the reaction 3',5'-cyclic GMP + H2O = GMP + H(+). In terms of biological role, participates in processes of transmission and amplification of the visual signal. cGMP-PDEs are the effector molecules in G-protein-mediated phototransduction in vertebrate rods and cones. The polypeptide is Retinal cone rhodopsin-sensitive cGMP 3',5'-cyclic phosphodiesterase subunit gamma (PDE6H) (Bos taurus (Bovine)).